The chain runs to 420 residues: Glucose-1-phosphate adenylyltransferase (420 aa).

Alpha-D-glucose 1-phosphate contacts are provided by residues Tyr107, Gly173, Glu188–Lys189, and Ser206.

The protein belongs to the bacterial/plant glucose-1-phosphate adenylyltransferase family. Homotetramer.

It carries out the reaction alpha-D-glucose 1-phosphate + ATP + H(+) = ADP-alpha-D-glucose + diphosphate. It participates in glycan biosynthesis; glycogen biosynthesis. Involved in the biosynthesis of ADP-glucose, a building block required for the elongation reactions to produce glycogen. Catalyzes the reaction between ATP and alpha-D-glucose 1-phosphate (G1P) to produce pyrophosphate and ADP-Glc. In Shewanella sp. (strain W3-18-1), this protein is Glucose-1-phosphate adenylyltransferase.